The chain runs to 987 residues: VPS35 endosomal protein sorting factor-like (987 aa).

Residues 1-23 show a composition bias toward low complexity; the sequence is MAERQSASSPTPSSPPQQQQQTP. The disordered stretch occupies residues 1–115; the sequence is MAERQSASSP…DPLNNPLEKK (115 aa). Over residues 43–63 the composition is skewed to basic and acidic residues; that stretch reads NGREVERHPLNSITKTEDTGK. Over residues 66–111 the composition is skewed to low complexity; that stretch reads QSSLSSNASSLQSAAAAASSSTATTDIDPLNNNNNNNTDIDPLNNP.

The protein belongs to the VPS35L family. As to quaternary structure, component of the heterotrimeric retriever complex.

The protein localises to the endosome. In terms of biological role, acts as a component of the retriever complex. The retriever complex is a heterotrimeric complex related to retromer cargo-selective complex (CSC) and essential for retromer-independent retrieval and recycling of numerous cargos. This Dictyostelium discoideum (Social amoeba) protein is VPS35 endosomal protein sorting factor-like.